The primary structure comprises 965 residues: Villin-3 (965 aa).

Gelsolin-like repeat units lie at residues 27 to 79, 150 to 190, 262 to 304, 401 to 452, 533 to 573, and 635 to 676; these read ENFE…DEAG, VHLK…QERA, GQVE…EERK, ANSK…EDQE, NKAL…EQQE, and FQVE…KEKQ. 2 stretches are compositionally biased toward low complexity: residues 769 to 780 and 808 to 828; these read AFNSSSGRTSSP and SSPS…ASQR. 2 disordered regions span residues 769-828 and 840-906; these read AFNS…ASQR and TAEK…GVTF. The segment covering 865 to 879 has biased composition (acidic residues); it reads EATEEATEAKEEEEV. A Phosphoserine modification is found at Ser880. Residues 900 to 965 enclose the HP domain; the sequence is ETTGVTFTYE…DLLKKKFNLF (66 aa).

This sequence belongs to the villin/gelsolin family. In terms of tissue distribution, expressed in all tissues examined, including root hairs.

The protein localises to the cytoplasm. It localises to the cytoskeleton. In terms of biological role, binds actin and actin filament bundles in a Ca(2+)-insensitive manner, but severs actin filaments in a calcium-dependent manner, regardless of the presence or not of VLN1 (AC O81643). Acts redundantly with VLN2 (AC O81644) to generate thick actin filament bundles, to regulate directional organ growth and in sclerenchyma development. The chain is Villin-3 from Arabidopsis thaliana (Mouse-ear cress).